Consider the following 357-residue polypeptide: RGG repeats nuclear RNA binding protein C (357 aa).

A2 bears the N-acetylalanine mark. The interval 25–232 (SQKVEKAAAA…AEEAEAREMT (208 aa)) is disordered. The segment covering 31–45 (AAAAVQPPKAAKFPT) has biased composition (low complexity). Composition is skewed to gly residues over residues 63-82 (GGRGGTGGRGGFSRGRGNGG) and 114-128 (SRGGSVGGYRVGGGR). Over residues 143–155 (DVERPPRNYDRHS) the composition is skewed to basic and acidic residues. Residues 159-172 (HGTGMKRNGGGRGN) are compositionally biased toward gly residues. Over residues 190-232 (EVEKSPVAEKQGGEDETPEAKKELTAEEKAQKEAEEAEAREMT) the composition is skewed to basic and acidic residues. Residues 239–299 (ILEEKKKALQ…KDATEKAKKS (61 aa)) enclose the FF domain. Residues 308–357 (PADGKRYNGRGGGSRGRGGRGGRGEGGNQRYAKEAAAPAIGDTAQFPSLG) are disordered. Residues 316–334 (GRGGGSRGRGGRGGRGEGG) show a composition bias toward gly residues. S355 bears the Phosphoserine mark.

Belongs to the SERBP1-HABP4 family.

The protein resides in the nucleus. The protein localises to the cytoplasm. It localises to the perinuclear region. In terms of biological role, ribosome-binding protein that acts as a regulator of mRNA translation by promoting ribosome inactivation. Binds RNA. The chain is RGG repeats nuclear RNA binding protein C from Arabidopsis thaliana (Mouse-ear cress).